A 211-amino-acid chain; its full sequence is MDSKEYLISYGWKEGEAFREGGLKRPILVKHKRDKKGLGNAPGGNDGEAWWERLFDGHLKNLDVSTDSNNGSIKFTQNEAVATAVSKSSSPLYRWFVKGEGLKGTITNLGKKEEASFVVSSASSSKGKKRRRRDEDDNKVKRKKLKKDKKTSNDSESKKKKKKKSKKESKKGKKSKHSSDEGDKSKHKKSKKSKKHKKEESSARRDRKEHI.

The disordered stretch occupies residues 115-211; sequence ASFVVSSASS…SARRDRKEHI (97 aa). Residues 116-125 show a composition bias toward low complexity; sequence SFVVSSASSS. 3 stretches are compositionally biased toward basic residues: residues 140 to 149, 158 to 176, and 185 to 197; these read VKRKKLKKDK, KKKK…KKSK, and SKHK…KKHK. The span at 198-211 shows a compositional bias: basic and acidic residues; the sequence is KEESSARRDRKEHI.

In terms of assembly, forms homooligomers. Associates with ribosomal complexes.

The protein localises to the nucleus. It localises to the nucleolus. Functionally, trans-acting factors of the ribosome biogenesis process. The sequence is that of Protein TMA23 (TMA23) from Saccharomyces cerevisiae (strain ATCC 204508 / S288c) (Baker's yeast).